The primary structure comprises 1043 residues: Isoleucine--tRNA ligase (1043 aa).

Residues 48–58 carry the 'HIGH' region motif; the sequence is PFATGLPHYGH. The 'KMSKS' region motif lies at 591-595; that stretch reads KMSKR. ATP is bound at residue Lys594.

Belongs to the class-I aminoacyl-tRNA synthetase family. IleS type 2 subfamily. In terms of assembly, monomer. The cofactor is Zn(2+).

Its subcellular location is the cytoplasm. The enzyme catalyses tRNA(Ile) + L-isoleucine + ATP = L-isoleucyl-tRNA(Ile) + AMP + diphosphate. In terms of biological role, catalyzes the attachment of isoleucine to tRNA(Ile). As IleRS can inadvertently accommodate and process structurally similar amino acids such as valine, to avoid such errors it has two additional distinct tRNA(Ile)-dependent editing activities. One activity is designated as 'pretransfer' editing and involves the hydrolysis of activated Val-AMP. The other activity is designated 'posttransfer' editing and involves deacylation of mischarged Val-tRNA(Ile). This Chlamydia pneumoniae (Chlamydophila pneumoniae) protein is Isoleucine--tRNA ligase.